Here is a 161-residue protein sequence, read N- to C-terminus: UPF0225 protein HI_0277 (161 aa).

Belongs to the UPF0225 family.

The sequence is that of UPF0225 protein HI_0277 from Haemophilus influenzae (strain ATCC 51907 / DSM 11121 / KW20 / Rd).